The following is a 231-amino-acid chain: Antiholin-like protein LrgB (231 aa).

Transmembrane regions (helical) follow at residues 7 to 24, 34 to 56, 91 to 113, 149 to 171, and 207 to 229; these read PYFG…GTFL, FTPL…FSYA, WWQI…YLLA, ITAF…FLKV, and ASIA…VQLI.

It belongs to the CidB/LrgB family. LrgB subfamily.

The protein localises to the cell membrane. Inhibits the expression or activity of extracellular murein hydrolases by interacting, possibly with LrgA, with the holin-like protein CidA. The LrgAB and CidA proteins may affect the proton motive force of the membrane. May be involved in programmed cell death (PCD), possibly triggering PCD in response to antibiotics and environmental stresses. The polypeptide is Antiholin-like protein LrgB (Bacillus subtilis (strain 168)).